Reading from the N-terminus, the 691-residue chain is Pleckstrin homology domain-containing family G member 7 (691 aa).

Disordered regions lie at residues 1–48 (MEKT…ISTS) and 109–140 (TSEPERALNAADSLEPQTRPTDKYLPPELQPV). The region spanning 313-488 (MIFMNTLRYL…EGKVKWLDNF (176 aa)) is the DH domain. A glycan (N-linked (GlcNAc...) asparagine) is linked at asparagine 395. In terms of domain architecture, PH spans 535-668 (HLLYEGKLTL…WMAQITTAIS (134 aa)).

This is Pleckstrin homology domain-containing family G member 7 from Homo sapiens (Human).